Consider the following 105-residue polypeptide: Small ribosomal subunit protein uS17 (105 aa).

Belongs to the universal ribosomal protein uS17 family. In terms of assembly, part of the 30S ribosomal subunit. Contacts protein S12.

One of the primary rRNA binding proteins, it binds directly to 16S rRNA where it helps nucleate assembly of the platform and body of the 30S subunit by bringing together and stabilizing interactions between several different RNA helices. The combined cluster of proteins S8, S12 and S17 appears to hold together the shoulder and platform of the 30S subunit. In Thermus thermophilus (strain ATCC 27634 / DSM 579 / HB8), this protein is Small ribosomal subunit protein uS17.